The chain runs to 1137 residues: Protein sel-1 homolog 3 (1137 aa).

A disordered region spans residues 1–42 (MQWRGAGLWWPRRRQQQQQQQPPPPAFGPPAAAMVPPSRGVS). N-linked (GlcNAc...) asparagine glycans are attached at residues Asn206 and Asn387. 7 Sel1-like repeats span residues 575–609 (HKASYYLTVFYETGLNGPRDQLQGMLYSLVGGQGS), 611–647 (RLSSMNLGYKHYQGVDSYPLDWELSYAYYSNIATKTP), 694–730 (AAAQQRLAQMLFWGQQGVAKNPEAAIEWYAKGALETE), 732–767 (PALIYDYAIVLFKGQGVKKNRRLALELMKKAASKGL), 768–800 (HQAVNGLGWYYHKFRKNYAKAAKYWLKAEEMGN), 801–839 (PDASYNLGVLYLDGIFPGVPGRNLTLAGEYFHKAAQGGH), and 840–877 (IEGTLWCSLYYITGNLETFPRDPEKAVVWAKHVAEKNG). Position 613 is a phosphoserine (Ser613). Asn942 carries an N-linked (GlcNAc...) asparagine glycan. The stretch at 952–988 (SFAYLKMGDLYYYGHQNQSQDLELSVQMYAQAALDGD) is one Sel1-like 8 repeat. The helical transmembrane segment at 1067 to 1087 (LIYFLGTFLLSVVIAWMVLYL) threads the bilayer. Residues 1100–1137 (AWVSADPTSSTPSPAVPPAADASDHDPPMMANGPEPRG) are disordered. Low complexity predominate over residues 1102 to 1120 (VSADPTSSTPSPAVPPAAD).

The protein localises to the membrane. This is Protein sel-1 homolog 3 (Sel1l3) from Mus musculus (Mouse).